Reading from the N-terminus, the 466-residue chain is Ornithine decarboxylase (466 aa).

Lysine 116 is modified (N6-(pyridoxal phosphate)lysine). Pyridoxal 5'-phosphate-binding positions include serine 247, glycine 286, and 318-321 (EPGR). A substrate-binding site is contributed by 362-363 (FD). Cysteine 411 functions as the Proton donor; shared with dimeric partner in the catalytic mechanism. Aspartate 412 provides a ligand contact to substrate. Residue tyrosine 441 coordinates pyridoxal 5'-phosphate.

This sequence belongs to the Orn/Lys/Arg decarboxylase class-II family. As to quaternary structure, homodimer. Only the dimer is catalytically active, as the active sites are constructed of residues from both monomers. Pyridoxal 5'-phosphate serves as cofactor.

It is found in the cytoplasm. It carries out the reaction L-ornithine + H(+) = putrescine + CO2. It functions in the pathway amine and polyamine biosynthesis; putrescine biosynthesis via L-ornithine pathway; putrescine from L-ornithine: step 1/1. With respect to regulation, inhibited by antizyme (AZ) OAZ1 in response to polyamine levels. AZ inhibits the assembly of the functional homodimer by binding to ODC monomers and targeting them for ubiquitin-independent proteolytic destruction by the 26S proteasome. In terms of biological role, catalyzes the first and rate-limiting step of polyamine biosynthesis that converts ornithine into putrescine, which is the precursor for the polyamines, spermidine and spermine. Polyamines are essential for cell proliferation and are implicated in cellular processes, ranging from DNA replication to apoptosis. This Saccharomyces cerevisiae (strain ATCC 204508 / S288c) (Baker's yeast) protein is Ornithine decarboxylase.